Consider the following 104-residue polypeptide: Biogenesis of lysosome-related organelles complex 1 subunit BLS1 (104 aa).

This sequence belongs to the BLOC1S1 family. Component of the biogenesis of lysosome-related organelles complex-1 (BLOC-1).

It is found in the endosome. In terms of biological role, component of the biogenesis of lysosome-related organelles complex-1 (BLOC-1), a complex involved in endosomal cargo sorting. The protein is Biogenesis of lysosome-related organelles complex 1 subunit BLS1 (BLS1) of Kluyveromyces lactis (strain ATCC 8585 / CBS 2359 / DSM 70799 / NBRC 1267 / NRRL Y-1140 / WM37) (Yeast).